The sequence spans 224 residues: Pre-hexon-linking protein VIII (224 aa).

Threonine 64 carries the post-translational modification Phosphothreonine; by host. Positions 112 to 154 are excised as a propeptide; the sequence is RQPSPSHIDIKDTMLAGTGIQLGEDIPSVSWIRPDGIFQLGGG.

The protein belongs to the adenoviridae hexon-linking protein family. As to quaternary structure, interacts with the peripentonal hexons as well as the hexons in the facets. Part of a complex composed of the core-capsid bridging protein, the endosome lysis protein VI and the hexon-linking protein VIII; these interactions bridge the virus core to the capsid. Cleaved by the viral protease during virion maturation. May cause the middle segment to be shed from the capsid.

It localises to the virion. Its subcellular location is the host nucleus. Functionally, structural component of the virion that acts as a cement protein on the capsid interior and which glue the peripentonal hexons and group-of-nine hexons together. The chain is Pre-hexon-linking protein VIII from Canine adenovirus serotype 1 (strain CLL) (CAdV-1).